The sequence spans 844 residues: DNA mismatch repair protein MutS (844 aa).

610–617 (GPNMGGKS) provides a ligand contact to ATP.

This sequence belongs to the DNA mismatch repair MutS family.

Its function is as follows. This protein is involved in the repair of mismatches in DNA. It is possible that it carries out the mismatch recognition step. This protein has a weak ATPase activity. This is DNA mismatch repair protein MutS from Francisella tularensis subsp. holarctica (strain FTNF002-00 / FTA).